We begin with the raw amino-acid sequence, 229 residues long: 2-C-methyl-D-erythritol 4-phosphate cytidylyltransferase (229 aa).

It belongs to the IspD/TarI cytidylyltransferase family. IspD subfamily.

The enzyme catalyses 2-C-methyl-D-erythritol 4-phosphate + CTP + H(+) = 4-CDP-2-C-methyl-D-erythritol + diphosphate. Its pathway is isoprenoid biosynthesis; isopentenyl diphosphate biosynthesis via DXP pathway; isopentenyl diphosphate from 1-deoxy-D-xylulose 5-phosphate: step 2/6. Functionally, catalyzes the formation of 4-diphosphocytidyl-2-C-methyl-D-erythritol from CTP and 2-C-methyl-D-erythritol 4-phosphate (MEP). In Neisseria meningitidis serogroup B (strain ATCC BAA-335 / MC58), this protein is 2-C-methyl-D-erythritol 4-phosphate cytidylyltransferase.